The primary structure comprises 525 residues: MAPSSAQGLELLHGYLNLFTPRTGDVSFMRLVSGYVLATFVAGIGALLLWTLTTVFYRLYLHPLRRYPGPKLWAISRLPYIRSTVKGTIVHDFHRLHKQYGSVVRIAPDELSYSTPEATKVIYQSSPELHKDPMHLPPFHNGTPGILAAEEQHHRRYRRLLAYGFSDRGMRAQQPLIQRHIDLLVKRLSENSGKGSLDIVEWYNWCTFDIIGDLAFGESFGCLEESKTHEWIASIAGNVKAIPIINAIRRFKLDWVIPLIAPKKLLKMRQRNAQFTENKVDQRLSHGADRGDLWDGVMDPKGTKGGMSRQEMISNGSAIVLAGSETSSTLLSGCTWLLLQNPDVLAKLKEHVRGSFTDQSEIDLISVGKLDYMAAVLDEALRLYPPVPMQSNRIVNPGGADIAGQYVPAGTTVAVQQYAACRSSDNFRRPDEFLPQRWLEDPEFANDRRATSQPFSVGPRNCIGRQLAHAEMRLILAKILWHFDLELDAPKMGPRDWLSEQGVWILWDKSPLWVRLMPRTLEKSG.

Residues 36–56 form a helical membrane-spanning segment; sequence VLATFVAGIGALLLWTLTTVF. Residue Asn315 is glycosylated (N-linked (GlcNAc...) asparagine). Cys462 lines the heme pocket.

It belongs to the cytochrome P450 family. Heme serves as cofactor.

The protein localises to the membrane. The enzyme catalyses (1'S)-averantin + reduced [NADPH--hemoprotein reductase] + O2 = (1'S,5'R)-5'-hydroxyaverantin + oxidized [NADPH--hemoprotein reductase] + H2O. It carries out the reaction (1'S)-averantin + reduced [NADPH--hemoprotein reductase] + O2 = (1'S,5'S)-5'-hydroxyaverantin + oxidized [NADPH--hemoprotein reductase] + H2O + H(+). It participates in mycotoxin biosynthesis. In terms of biological role, averantin hydroxylase; part of the fragmented gene cluster that mediates the biosynthesis of dothistromin (DOTH), a polyketide toxin very similar in structure to the aflatoxin precursor, versicolorin B. The first step of the pathway is the conversion of acetate to norsolorinic acid (NOR) and requires the fatty acid synthase subunits hexA and hexB, as well as the polyketide synthase pksA. PksA combines a hexanoyl starter unit and 7 malonyl-CoA extender units to synthesize the precursor NOR. The hexanoyl starter unit is provided to the acyl-carrier protein (ACP) domain by the fungal fatty acid synthase hexA/hexB. The second step is the conversion of NOR to averantin (AVN) and requires the norsolorinic acid ketoreductase nor1, which catalyzes the dehydration of norsolorinic acid to form (1'S)-averantin. The cytochrome P450 monooxygenase avnA then catalyzes the hydroxylation of AVN to 5'hydroxyaverantin (HAVN). The next step is performed by adhA that transforms HAVN to averufin (AVF). Averufin might then be converted to hydroxyversicolorone by cypX and avfA. Hydroxyversicolorone is further converted versiconal hemiacetal acetate (VHA) by moxY. VHA is then the substrate for the versiconal hemiacetal acetate esterase est1 to yield versiconal (VAL). Versicolorin B synthase vbsA then converts VAL to versicolorin B (VERB) by closing the bisfuran ring. Then, the activity of the versicolorin B desaturase verB leads to versicolorin A (VERA). DotB, a predicted chloroperoxidase, may perform epoxidation of the A-ring of VERA. Alternatively, a cytochrome P450, such as cypX or avnA could catalyze this step. It is also possible that another, uncharacterized, cytochrome P450 enzyme is responsible for this step. Opening of the epoxide could potentially be achieved by the epoxide hydrolase epoA. However, epoA seems not to be required for DOTH biosynthesis, but other epoxide hydrolases may have the ability to complement this hydrolysis. Alternatively, opening of the epoxide ring could be achieved non-enzymatically. The next step is the deoxygenation of ring A to yield the 5,8-dihydroxyanthraquinone which is most likely catalyzed by the NADPH dehydrogenase encoded by ver1. The last stages of DOTH biosynthesis are proposed to involve hydroxylation of the bisfuran. OrdB and norB might have oxidative roles here. An alternative possibility is that cytochrome P450 monoogenases such as avnA and cypX might perform these steps in addition to previously proposed steps. The polypeptide is Averantin hydroxylase (Dothistroma septosporum (strain NZE10 / CBS 128990) (Red band needle blight fungus)).